The sequence spans 213 residues: Ribonuclease HII (213 aa).

The region spanning 25–213 (KTLCGVDEAG…FKPVKQLLPH (189 aa)) is the RNase H type-2 domain. Residues Asp-31, Glu-32, and Asp-124 each coordinate a divalent metal cation.

Belongs to the RNase HII family. The cofactor is Mn(2+). Requires Mg(2+) as cofactor.

The protein resides in the cytoplasm. It catalyses the reaction Endonucleolytic cleavage to 5'-phosphomonoester.. Its function is as follows. Endonuclease that specifically degrades the RNA of RNA-DNA hybrids. The polypeptide is Ribonuclease HII (Magnetococcus marinus (strain ATCC BAA-1437 / JCM 17883 / MC-1)).